The chain runs to 538 residues: Beta-1,4-mannosyl-glycoprotein 4-beta-N-acetylglucosaminyltransferase (538 aa).

Over 1–7 (MKMRRYK) the chain is Cytoplasmic. A helical; Signal-anchor for type II membrane protein transmembrane segment spans residues 8–23 (LFLMFCMAGLCLISFL). The Lumenal portion of the chain corresponds to 24 to 538 (HFFKTLSYVT…VRGKLDTAEG (515 aa)). The tract at residues 120–161 (PGTRMLEKPSPGRTEEKTEVSEGSSARGPARRPMRHVLSSRE) is disordered. N-linked (GlcNAc...) asparagine glycosylation is found at Asn-245, Asn-263, and Asn-401. The segment at 507-538 (REPKSTVEGGRQNQGSDGRSSAVRGKLDTAEG) is disordered.

It belongs to the glycosyltransferase 17 family. Interacts with MGAT4D. Highly expressed in brain and kidney and to a much lesser extent in stomach, heart, intestine, uterus, testis, ovary and lung. Not present in spleen, liver and muscle. In brain, expressed in neurons of hippocampus.

It localises to the golgi apparatus membrane. The enzyme catalyses N(4)-{beta-D-GlcNAc-(1-&gt;2)-alpha-D-Man-(1-&gt;3)-[beta-D-GlcNAc-(1-&gt;2)-alpha-D-Man-(1-&gt;6)]-beta-D-Man-(1-&gt;4)-beta-D-GlcNAc-(1-&gt;4)-beta-D-GlcNAc}-L-asparaginyl-[protein] + UDP-N-acetyl-alpha-D-glucosamine = N(4)-{beta-D-GlcNAc-(1-&gt;2)-alpha-D-Man-(1-&gt;3)-[beta-D-GlcNAc-(1-&gt;4)]-[beta-D-GlcNAc-(1-&gt;2)-alpha-D-Man-(1-&gt;6)]-beta-D-Man-(1-&gt;4)-beta-D-GlcNAc-(1-&gt;4)-beta-D-GlcNAc}-L-asparaginyl-[protein] + UDP + H(+). Its pathway is protein modification; protein glycosylation. Functionally, it is involved in the regulation of the biosynthesis and biological function of glycoprotein oligosaccharides. Catalyzes the addition of N-acetylglucosamine in beta 1-4 linkage to the beta-linked mannose of the trimannosyl core of N-linked sugar chains, called bisecting N-acetylglucosamine (GlcNAc). It is one of the most important enzymes involved in the regulation of the biosynthesis of glycoprotein oligosaccharides. The addition of this bisecting GlcNAc residue alters not only the composition, but also the conformation of the N-glycan. The introduction of the bisecting GlcNAc residue results in the suppression of further processing and elongation of N-glycans, precluding the formation of beta-1,6 GlcNAc branching, catalyzed by MGAT5 since it is unable to use the bisected oligosaccharide as a substrate. Addition of bisecting N-acetylglucosamine to CDH1/E-cadherin modulates CDH1 cell membrane location. Inhibits NeuAc-alpha-2,3-Gal-beta-1,4-GlcNAc- formation which modulates sialylation levels and plays a role in cell migration regulation. In brain, addition of bisecting N-acetylglucosamine to BACE1 blocks its lysosomal targeting in response to oxidative stress and further degradation which increases its location to early endosome and the APP cleavage. In Mus musculus (Mouse), this protein is Beta-1,4-mannosyl-glycoprotein 4-beta-N-acetylglucosaminyltransferase.